Here is a 122-residue protein sequence, read N- to C-terminus: Small ribosomal subunit protein bS6 (122 aa).

Belongs to the bacterial ribosomal protein bS6 family.

Functionally, binds together with bS18 to 16S ribosomal RNA. The protein is Small ribosomal subunit protein bS6 of Methylibium petroleiphilum (strain ATCC BAA-1232 / LMG 22953 / PM1).